The sequence spans 590 residues: Aspartate--tRNA(Asp/Asn) ligase (590 aa).

E173 is a binding site for L-aspartate. Residues 197–200 (QIFK) are aspartate. R219 provides a ligand contact to L-aspartate. ATP is bound by residues 219 to 221 (RDE) and Q228. H450 is a binding site for L-aspartate. E484 lines the ATP pocket. L-aspartate is bound at residue R491. An ATP-binding site is contributed by 536-539 (GLDR).

Belongs to the class-II aminoacyl-tRNA synthetase family. Type 1 subfamily. Homodimer.

Its subcellular location is the cytoplasm. It catalyses the reaction tRNA(Asx) + L-aspartate + ATP = L-aspartyl-tRNA(Asx) + AMP + diphosphate. Functionally, aspartyl-tRNA synthetase with relaxed tRNA specificity since it is able to aspartylate not only its cognate tRNA(Asp) but also tRNA(Asn). Reaction proceeds in two steps: L-aspartate is first activated by ATP to form Asp-AMP and then transferred to the acceptor end of tRNA(Asp/Asn). The polypeptide is Aspartate--tRNA(Asp/Asn) ligase (Coxiella burnetii (strain RSA 493 / Nine Mile phase I)).